Consider the following 492-residue polypeptide: MKKTVVIGAGFGGLALAIRLQAAGIPTVLLEQRDKPGGRAYVWHDQGFTFDAGPTVITDPTALEALFTLAGRRMEDYVRLLPVKPFYRLCWESGKTLDYANDSAELEAQITQFNPRDVEGYRRFLAYSQAVFQEGYLRLGSVPFLSFRDMLRAGPQLLKLQAWQSVYQSVSRFIEDEHLRQAFSFHSLLVGGNPFTTSSIYTLIHALEREWGVWFPEGGTGALVNGMVKLFTDLGGEIELNARVEELVVADNRVSQVRLADGRIFDTDAVASNADVVNTYKKLLGHHPVGQKRAAALERKSMSNSLFVLYFGLNQPHSQLAHHTICFGPRYRELIDEIFTGSALADDFSLYLHSPCVTDPSLAPPGCASFYVLAPVPHLGNAPLDWAQEGPKLRDRIFDYLEERYMPGLRSQLVTQRIFTPADFHDTLDAHLGSAFSIEPLLTQSAWFRPHNRDSDIANLYLVGAGTHPGAGIPGVVASAKATASLMIEDLQ.

Val-5 to Gly-38 contributes to the FAD binding site.

This sequence belongs to the carotenoid/retinoid oxidoreductase family. FAD is required as a cofactor.

It carries out the reaction 15-cis-phytoene + 4 A = all-trans-lycopene + 4 AH2. It participates in carotenoid biosynthesis; lycopene biosynthesis. In terms of biological role, this enzyme converts phytoene into lycopene via the intermediaries of phytofluene, zeta-carotene and neurosporene by the introduction of four double bonds. This Pseudescherichia vulneris (Escherichia vulneris) protein is Phytoene desaturase (lycopene-forming) (crtI).